Reading from the N-terminus, the 81-residue chain is Small ribosomal subunit protein bS20 (81 aa).

Basic residues predominate over residues 1–11 (MPNIKSQKKRV). The segment at 1-20 (MPNIKSQKKRVLTNEKSRAS) is disordered.

It belongs to the bacterial ribosomal protein bS20 family.

Its function is as follows. Binds directly to 16S ribosomal RNA. This Mesoplasma florum (strain ATCC 33453 / NBRC 100688 / NCTC 11704 / L1) (Acholeplasma florum) protein is Small ribosomal subunit protein bS20.